Reading from the N-terminus, the 411-residue chain is NADH-quinone oxidoreductase subunit D 2 (411 aa).

It belongs to the complex I 49 kDa subunit family. As to quaternary structure, NDH-1 is composed of 14 different subunits. Subunits NuoB, C, D, E, F, and G constitute the peripheral sector of the complex.

It is found in the cell membrane. The catalysed reaction is a quinone + NADH + 5 H(+)(in) = a quinol + NAD(+) + 4 H(+)(out). In terms of biological role, NDH-1 shuttles electrons from NADH, via FMN and iron-sulfur (Fe-S) centers, to quinones in the respiratory chain. The immediate electron acceptor for the enzyme in this species is believed to be ubiquinone. Couples the redox reaction to proton translocation (for every two electrons transferred, four hydrogen ions are translocated across the cytoplasmic membrane), and thus conserves the redox energy in a proton gradient. The sequence is that of NADH-quinone oxidoreductase subunit D 2 from Chloroflexus aurantiacus (strain ATCC 29366 / DSM 635 / J-10-fl).